The sequence spans 651 residues: Protein RcaC (651 aa).

The 115-residue stretch at 2–116 (KILLVEDDDV…ELIARIRALL (115 aa)) folds into the Response regulatory 1 domain. At D51 the chain carries 4-aspartylphosphate. A DNA-binding region (ompR/PhoB-type) is located at residues 124–223 (FPLLTWGDLL…MHGRGYYLKA (100 aa)). Response regulatory domains lie at 384-519 (LLLM…VNLL) and 527-643 (KVMI…LRRL).

Functionally, required for chromatic adaptation. Thought to be a positive regulator of phycobiliproteins. The protein is Protein RcaC (rcaC) of Microchaete diplosiphon (Fremyella diplosiphon).